The primary structure comprises 201 residues: Large ribosomal subunit protein bL9 (201 aa).

The segment covering 150 to 165 (EAERQAAGEDLTQRRD) has biased composition (basic and acidic residues). The interval 150–201 (EAERQAAGEDLTQRRDDEEEEAVEAAEFFESEELAPGDEEEEAAGEEEDAKE) is disordered. Residues 166–201 (DEEEEAVEAAEFFESEELAPGDEEEEAAGEEEDAKE) are compositionally biased toward acidic residues.

This sequence belongs to the bacterial ribosomal protein bL9 family.

In terms of biological role, binds to the 23S rRNA. This chain is Large ribosomal subunit protein bL9, found in Parvibaculum lavamentivorans (strain DS-1 / DSM 13023 / NCIMB 13966).